The chain runs to 150 residues: Ribosomal RNA large subunit methyltransferase H (150 aa).

Residues A100 and 118 to 123 (LSEMTF) each bind S-adenosyl-L-methionine.

This sequence belongs to the RNA methyltransferase RlmH family. In terms of assembly, homodimer.

Its subcellular location is the cytoplasm. It carries out the reaction pseudouridine(1915) in 23S rRNA + S-adenosyl-L-methionine = N(3)-methylpseudouridine(1915) in 23S rRNA + S-adenosyl-L-homocysteine + H(+). Functionally, specifically methylates the pseudouridine at position 1915 (m3Psi1915) in 23S rRNA. The sequence is that of Ribosomal RNA large subunit methyltransferase H from Helicobacter pylori (strain J99 / ATCC 700824) (Campylobacter pylori J99).